Here is a 94-residue protein sequence, read N- to C-terminus: MAVLTDEQVDAALHDLNGWQRAGGVLRRSIKFPTFMAGIDAVRRVAERAEEVNHHPDIDIRWRTVTFALVTHAVGGITENDIAMAHDIDAMFGA.

It belongs to the pterin-4-alpha-carbinolamine dehydratase family.

It carries out the reaction (4aS,6R)-4a-hydroxy-L-erythro-5,6,7,8-tetrahydrobiopterin = (6R)-L-erythro-6,7-dihydrobiopterin + H2O. The chain is Putative pterin-4-alpha-carbinolamine dehydratase from Mycobacterium tuberculosis (strain ATCC 25177 / H37Ra).